Consider the following 167-residue polypeptide: Large ribosomal subunit protein uL10 (167 aa).

It belongs to the universal ribosomal protein uL10 family. In terms of assembly, part of the ribosomal stalk of the 50S ribosomal subunit. The N-terminus interacts with L11 and the large rRNA to form the base of the stalk. The C-terminus forms an elongated spine to which L12 dimers bind in a sequential fashion forming a multimeric L10(L12)X complex.

Functionally, forms part of the ribosomal stalk, playing a central role in the interaction of the ribosome with GTP-bound translation factors. The chain is Large ribosomal subunit protein uL10 from Flavobacterium johnsoniae (strain ATCC 17061 / DSM 2064 / JCM 8514 / BCRC 14874 / CCUG 350202 / NBRC 14942 / NCIMB 11054 / UW101) (Cytophaga johnsonae).